We begin with the raw amino-acid sequence, 485 residues long: Glutamyl-tRNA(Gln) amidotransferase subunit A (485 aa).

Residues Lys-78 and Ser-153 each act as charge relay system in the active site. The Acyl-ester intermediate role is filled by Ser-177.

The protein belongs to the amidase family. GatA subfamily. Heterotrimer of A, B and C subunits.

The enzyme catalyses L-glutamyl-tRNA(Gln) + L-glutamine + ATP + H2O = L-glutaminyl-tRNA(Gln) + L-glutamate + ADP + phosphate + H(+). Its function is as follows. Allows the formation of correctly charged Gln-tRNA(Gln) through the transamidation of misacylated Glu-tRNA(Gln) in organisms which lack glutaminyl-tRNA synthetase. The reaction takes place in the presence of glutamine and ATP through an activated gamma-phospho-Glu-tRNA(Gln). This is Glutamyl-tRNA(Gln) amidotransferase subunit A from Bacillus cereus (strain ATCC 14579 / DSM 31 / CCUG 7414 / JCM 2152 / NBRC 15305 / NCIMB 9373 / NCTC 2599 / NRRL B-3711).